Consider the following 544-residue polypeptide: Probable protein kinase UbiB (544 aa).

In terms of domain architecture, Protein kinase spans Asp-123 to Leu-501. ATP-binding positions include Leu-129–Val-137 and Lys-152. Catalysis depends on Asp-287, which acts as the Proton acceptor. The helical transmembrane segment at Leu-515–Phe-537 threads the bilayer.

This sequence belongs to the ABC1 family. UbiB subfamily.

It localises to the cell inner membrane. The protein operates within cofactor biosynthesis; ubiquinone biosynthesis [regulation]. Is probably a protein kinase regulator of UbiI activity which is involved in aerobic coenzyme Q (ubiquinone) biosynthesis. The chain is Probable protein kinase UbiB from Aliivibrio fischeri (strain ATCC 700601 / ES114) (Vibrio fischeri).